The following is an 842-amino-acid chain: MVAFTVDQIRSLMDKVTNVRNMSVIAHVDHGKSTLTDSLVQRAGIISAAKAGEARFTDTRKDEQERGITIKSTAISLFSEMSEEDVKDIKQKTEGNSFLINLIDSPGHVDFSSEVTAALRVTDGALVVVDTVEGVCVQTETVLRQALGERIKPVVVINKVDRALLELQVSKEDLYQSFSRTVESVNVIISTYADEVLGDVQVYPQKGTVAFGSGLHGWAFTIRQFANRYSKKFGVDREKMMERLWGDSYFNPKTKKWTNKDRDADGKPLERAFNMFVLDPIFRLFAAIMNFKKDEIPVLLEKLEIALKSDERDLEGKALLKVVMRKFLPAADALLEMIIMHLPSPVTAQNYRAEQLYEGPSDDPACIAIKNCDPKADLMLYVSKMVPTSDKGRFYAFGRVFSGTVKSGQKVRIQGPSFTVGKKEDLFIKAIQRAVLMMGRFVEPIDDCPAGNIVGLVGIDQFLLKTGTLTTFESAHNMKVMKFSVSPVVQVAVEVKNANDLPKLVEGLKRLSKSDPCVLTYMSESGEHIVAGTGELHLEICLQDLENDHAGIPLKISPPVVAYRETVEGESSQVALSKSPNKHNRIYLKAQPIDEEVSLAIEGGKINPRDDFKARARVMADEYGWDVTDARKIWCFGPDGNGPNLVVDQTKAVQYLNEIKDSVVSAFQWATKEGPIFGEQMRSVRINLLDVTLHADAIHRGAGQIMPTMRRATYAGFLLAEPKIQEPVFLVEIQCPEQAVGGIYSVLNRKRGQVVSEEQRPGTPLFTVKAYLPVNESFGFTGELRQATGGQAFPQMVFDHWATLGTDPLDPTTKAGEIVVEARKRHGLKENVPGWQEYYDKL.

A tr-type G domain is found at 17–253 (TNVRNMSVIA…LWGDSYFNPK (237 aa)). GTP is bound by residues 26 to 33 (AHVDHGKS), 158 to 161 (NKVD), and 213 to 215 (SGL). At H699 the chain carries Diphthamide.

It belongs to the TRAFAC class translation factor GTPase superfamily. Classic translation factor GTPase family. EF-G/EF-2 subfamily.

It is found in the cytoplasm. The enzyme catalyses GTP + H2O = GDP + phosphate + H(+). In terms of biological role, catalyzes the GTP-dependent ribosomal translocation step during translation elongation. During this step, the ribosome changes from the pre-translocational (PRE) to the post-translocational (POST) state as the newly formed A-site-bound peptidyl-tRNA and P-site-bound deacylated tRNA move to the P and E sites, respectively. Catalyzes the coordinated movement of the two tRNA molecules, the mRNA and conformational changes in the ribosome. The protein is Elongation factor 2 (EFT1) of Eremothecium gossypii (strain ATCC 10895 / CBS 109.51 / FGSC 9923 / NRRL Y-1056) (Yeast).